A 390-amino-acid polypeptide reads, in one-letter code: Phosphopentomutase (390 aa).

6 residues coordinate Mn(2+): aspartate 11, aspartate 283, histidine 288, aspartate 324, histidine 325, and histidine 336.

The protein belongs to the phosphopentomutase family. Requires Mn(2+) as cofactor.

Its subcellular location is the cytoplasm. It catalyses the reaction 2-deoxy-alpha-D-ribose 1-phosphate = 2-deoxy-D-ribose 5-phosphate. The enzyme catalyses alpha-D-ribose 1-phosphate = D-ribose 5-phosphate. Its pathway is carbohydrate degradation; 2-deoxy-D-ribose 1-phosphate degradation; D-glyceraldehyde 3-phosphate and acetaldehyde from 2-deoxy-alpha-D-ribose 1-phosphate: step 1/2. Functionally, isomerase that catalyzes the conversion of deoxy-ribose 1-phosphate (dRib-1-P) and ribose 1-phosphate (Rib-1-P) to deoxy-ribose 5-phosphate (dRib-5-P) and ribose 5-phosphate (Rib-5-P), respectively. This Alkaliphilus oremlandii (strain OhILAs) (Clostridium oremlandii (strain OhILAs)) protein is Phosphopentomutase.